The following is a 2393-amino-acid chain: Leucine-rich repeat serine/threonine-protein kinase 1 (2393 aa).

ANK repeat units follow at residues 56–86 (HGRT…SLNL), 90–120 (RGKT…PMKS), 123–152 (EGHC…KESE), 197–226 (EDET…HLLQ), 230–259 (SKDT…QLVK), 264–293 (EGST…PSEF), 317–347 (ECRT…SIDG), 361–390 (RGRT…DVNL), 407–437 (IGSG…DTDN), and 439–464 (ALRL…FADP). LRR repeat units lie at residues 532 to 553 (AITR…LFQM), 555 to 576 (SLRS…TYYI), 580 to 600 (SLEI…QFLS), 604 to 625 (QLQQ…IWLC), and 627 to 648 (ALKE…ARAS). The disordered stretch occupies residues 649–675 (RGERPRLNNSNNNFNTQSPTQESNPIV). LRR repeat units lie at residues 718–739 (TLTT…LACT), 742–763 (RLLI…ACVP), and 765–787 (HLRT…SPLH). Residues 797–844 (TSNGSMLPKRRNSPARQHRSRSKSAVRSQRSLSVSRHHALIDPQKEEE) are disordered. Positions 804-820 (PKRRNSPARQHRSRSKS) are enriched in basic residues. Over residues 821–830 (AVRSQRSLSV) the composition is skewed to polar residues. A compositionally biased stretch (basic and acidic residues) spans 835–844 (ALIDPQKEEE). LRR repeat units lie at residues 856–877 (WLKT…NAAS), 883–905 (ALNV…ARLT), 906–928 (LLSM…YGML), and 930–952 (RLWS…VNVE). The Roc domain maps to 969–1167 (ESKTYHHLRL…NTIYRTAWEV (199 aa)). Residues 982–989 (GSDGVGKS), 1040–1044 (DFGGQ), and 1098–1101 (TNLD) contribute to the GTP site. Positions 1233–1422 (FYAACTFLHD…GFWSRLVTRI (190 aa)) constitute a COR domain. Disordered regions lie at residues 1361 to 1382 (CPSP…TDQN) and 1596 to 1633 (RNGS…RTTG). Composition is skewed to polar residues over residues 1366-1382 (GSPT…TDQN) and 1620-1633 (ITSS…RTTG). One can recognise a Protein kinase domain in the interval 1694–1992 (LKRSRMLGRG…LVGFCAAPEF (299 aa)). Residues 1700 to 1708 (LGRGAFGFV) and K1726 contribute to the ATP site. The active-site Proton acceptor is D1847.

This sequence belongs to the protein kinase superfamily. TKL Ser/Thr protein kinase family. ROCO subfamily. Mg(2+) serves as cofactor. It depends on Mn(2+) as a cofactor. In terms of tissue distribution, expressed in cell bodies, but not in dendritic or axonal processes, of adult head neurons. Also present in non-neuronal tissues, such as the body wall musculature and the epithelial cells of the nematode vulva.

The protein resides in the golgi apparatus. It catalyses the reaction L-seryl-[protein] + ATP = O-phospho-L-seryl-[protein] + ADP + H(+). It carries out the reaction L-threonyl-[protein] + ATP = O-phospho-L-threonyl-[protein] + ADP + H(+). In terms of biological role, determines polarized sorting of synaptic vesicle (SV) proteins to the axons by excluding SV proteins from the dendrite-specific transport machinery in the Golgi. Role in stress response. Appears to antagonize the effects of pink-1 both in the regulation of axon guidance and stress response. In Caenorhabditis elegans, this protein is Leucine-rich repeat serine/threonine-protein kinase 1 (lrk-1).